The sequence spans 198 residues: Large ribosomal subunit protein eL19 (198 aa).

Disordered regions lie at residues 66–85 (YEEA…RGTA) and 150–177 (KRAK…EERQ). The segment covering 71 to 83 (RKGRHTGYGKRRG) has biased composition (basic residues). A compositionally biased stretch (basic and acidic residues) spans 160-177 (QARRDKNKESRKRREERQ).

This sequence belongs to the eukaryotic ribosomal protein eL19 family.

The protein is Large ribosomal subunit protein eL19 (rpl-19) of Caenorhabditis elegans.